The sequence spans 466 residues: MSNGTIVQCIGAVVDIQFPRDSMPKVYDALKLEDAADSFAEAGLTFEVQQQLGDGVVRTIALGSSDGLRRGMKVSNTGKPISVPVGHGTLGRIMDVLGRPIDEAGPVETDELRAIHQKAPKFDELSPSVELLETGIKVIDLICPFAKGGKVGLFGGAGVGKTVNMMELINNIAKQHSGLSVFAGVGERTREGNDFYHEMKDSNVLDKVAMVFGQMNEPPGNRLRVALTGLTMAERFRDEGRDILFFVDNIYRYTLAGTEVSALLGRMPSAVGYQPTLAEEMGRLQERITSTKVGSITSIQAVYVPADDLTDPSPATTFLHLDSTVVLSRDIAALGIYPAVDPLDSTSRQLDPLVVGEEHYSVARAVQQTLQKYKELRDIIAILGMDELSPDDKLAVARARKIQRFLSQPFHVAEVFTGSPGKYVSLKDTIAGFKAIVNGEYDHLPEQAFYMVGGIEEVLEKAKKLQ.

Residue 155 to 162 (GGAGVGKT) participates in ATP binding.

The protein belongs to the ATPase alpha/beta chains family. As to quaternary structure, F-type ATPases have 2 components, CF(1) - the catalytic core - and CF(0) - the membrane proton channel. CF(1) has five subunits: alpha(3), beta(3), gamma(1), delta(1), epsilon(1). CF(0) has three main subunits: a(1), b(2) and c(9-12). The alpha and beta chains form an alternating ring which encloses part of the gamma chain. CF(1) is attached to CF(0) by a central stalk formed by the gamma and epsilon chains, while a peripheral stalk is formed by the delta and b chains.

It localises to the cell inner membrane. It carries out the reaction ATP + H2O + 4 H(+)(in) = ADP + phosphate + 5 H(+)(out). Functionally, produces ATP from ADP in the presence of a proton gradient across the membrane. The catalytic sites are hosted primarily by the beta subunits. In Azoarcus sp. (strain BH72), this protein is ATP synthase subunit beta.